A 583-amino-acid polypeptide reads, in one-letter code: CD166 antigen (583 aa).

An N-terminal signal peptide occupies residues 1–27 (MASKAAPSCRLVFCLLISATVLRPGLG). Ig-like V-type domains lie at 28–120 (WYTV…TEDD) and 125–234 (PTVV…KTVY). Residues 28–527 (WYTVNSAYGD…NKEKVNDQAK (500 aa)) are Extracellular-facing. Intrachain disulfides connect Cys-43/Cys-113 and Cys-157/Cys-220. 9 N-linked (GlcNAc...) asparagine glycosylation sites follow: Asn-91, Asn-95, Asn-167, Asn-265, Asn-306, Asn-361, Asn-457, Asn-480, and Asn-499. Ig-like C2-type domains are found at residues 245-328 (PTEQ…AAIT), 333-409 (DLSL…ESLT), and 416-501 (PQIK…LNVS). Cystine bridges form between Cys-270–Cys-313, Cys-354–Cys-392, and Cys-435–Cys-485. Residues 528 to 549 (LIVGIVVGLLLAALVAGVVYWL) form a helical membrane-spanning segment. Topologically, residues 550–583 (YMKKSKTASKHVNKDLGNMEENKKLEENNHKTEA) are cytoplasmic. The segment at 562-583 (NKDLGNMEENKKLEENNHKTEA) is disordered. Over residues 569 to 583 (EENKKLEENNHKTEA) the composition is skewed to basic and acidic residues.

As to quaternary structure, homodimer. Interacts (via extracellular domain) with CD6 (via extracellular domain). Homodimerization and interaction with CD6 involve the same region and cannot occur simultaneously. The affinity for CD6 is much higher than the affinity for self-association. Interacts (via glycosylated extracellular domain) with LGALS1 and LGALS3. Interaction with LGALS1 or LGALS3 inhibits interaction with CD6. Glycosylated. As to expression, constitutively expressed in the autonomic nervous system. Sympathetic and parasympathetic nerve fibers but not myelinated nerve fibers in the spinal nerve.

The protein resides in the cell membrane. Its subcellular location is the cell projection. The protein localises to the axon. It is found in the dendrite. Functionally, cell adhesion molecule that mediates both heterotypic cell-cell contacts via its interaction with CD6, as well as homotypic cell-cell contacts. Promotes T-cell activation and proliferation via its interactions with CD6. Contributes to the formation and maturation of the immunological synapse via its interactions with CD6. Mediates homotypic interactions with cells that express ALCAM. Mediates attachment of dendritic cells onto endothelial cells via homotypic interaction. Inhibits endothelial cell migration and promotes endothelial tube formation via homotypic interactions. Required for normal organization of the lymph vessel network. Required for normal hematopoietic stem cell engraftment in the bone marrow. Plays a role in hematopoiesis; required for normal numbers of hematopoietic stem cells in bone marrow. Promotes in vitro osteoblast proliferation and differentiation. Promotes neurite extension, axon growth and axon guidance; axons grow preferentially on surfaces that contain ALCAM. Mediates outgrowth and pathfinding for retinal ganglion cell axons. The protein is CD166 antigen (ALCAM) of Bos taurus (Bovine).